The sequence spans 351 residues: Photosystem II D2 protein (351 aa).

A helical membrane pass occupies residues 39–59 (CSYLALGAWFTGTTFVTSWYT). H116 provides a ligand contact to chlorophyll a. The helical transmembrane segment at 123 to 139 (GFCLRQFEIARLVGIRP) threads the bilayer. Pheophytin a-binding residues include Q128 and N141. A helical transmembrane segment spans residues 151-164 (VFVSVFLIYPLGQA). H196 is a binding site for chlorophyll a. Residues 206-226 (GALLCAIHGATVENTLFEDGE) form a helical membrane-spanning segment. H213 and F260 together coordinate a plastoquinone. H213 is a Fe cation binding site. H267 provides a ligand contact to Fe cation. The chain crosses the membrane as a helical span at residues 277–293 (GLWTSSIGIIGLALNLR).

This sequence belongs to the reaction center PufL/M/PsbA/D family. In terms of assembly, PSII is composed of 1 copy each of membrane proteins PsbA, PsbB, PsbC, PsbD, PsbE, PsbF, PsbH, PsbI, PsbJ, PsbK, PsbL, PsbM, PsbT, PsbY, PsbZ, Psb30/Ycf12, at least 3 peripheral proteins of the oxygen-evolving complex and a large number of cofactors. It forms dimeric complexes. The D1/D2 heterodimer binds P680, chlorophylls that are the primary electron donor of PSII, and subsequent electron acceptors. It shares a non-heme iron and each subunit binds pheophytin, quinone, additional chlorophylls, carotenoids and lipids. There is also a Cl(-1) ion associated with D1 and D2, which is required for oxygen evolution. The PSII complex binds additional chlorophylls, carotenoids and specific lipids. serves as cofactor.

Its subcellular location is the plastid. It is found in the chloroplast thylakoid membrane. It carries out the reaction 2 a plastoquinone + 4 hnu + 2 H2O = 2 a plastoquinol + O2. Its function is as follows. Photosystem II (PSII) is a light-driven water:plastoquinone oxidoreductase that uses light energy to abstract electrons from H(2)O, generating O(2) and a proton gradient subsequently used for ATP formation. It consists of a core antenna complex that captures photons, and an electron transfer chain that converts photonic excitation into a charge separation. The D1/D2 (PsbA/PsbD) reaction center heterodimer binds P680, the primary electron donor of PSII as well as several subsequent electron acceptors. D2 is needed for assembly of a stable PSII complex. This Galdieria sulphuraria (Red alga) protein is Photosystem II D2 protein.